Here is a 289-residue protein sequence, read N- to C-terminus: Glycine--tRNA ligase alpha subunit (289 aa).

Belongs to the class-II aminoacyl-tRNA synthetase family. Tetramer of two alpha and two beta subunits.

The protein resides in the cytoplasm. The enzyme catalyses tRNA(Gly) + glycine + ATP = glycyl-tRNA(Gly) + AMP + diphosphate. This is Glycine--tRNA ligase alpha subunit from Rickettsia typhi (strain ATCC VR-144 / Wilmington).